Reading from the N-terminus, the 128-residue chain is Large ribosomal subunit protein mL52 (128 aa).

The transit peptide at 1–28 (MLQIAKLCLATSGRITAQRYVAVTTARA) directs the protein to the mitochondrion.

It belongs to the mitochondrion-specific ribosomal protein mL52 family. As to quaternary structure, component of the mitochondrial ribosome large subunit (39S) which comprises a 16S rRNA and about 50 distinct proteins.

Its subcellular location is the mitochondrion. This is Large ribosomal subunit protein mL52 (mRpL52) from Drosophila pseudoobscura pseudoobscura (Fruit fly).